Here is a 242-residue protein sequence, read N- to C-terminus: Biosynthetic peptidoglycan transglycosylase (242 aa).

Residues 19 to 39 (LMVVLAIFWGGGIALFSVAPV) form a helical membrane-spanning segment.

The protein belongs to the glycosyltransferase 51 family.

It localises to the cell inner membrane. It carries out the reaction [GlcNAc-(1-&gt;4)-Mur2Ac(oyl-L-Ala-gamma-D-Glu-L-Lys-D-Ala-D-Ala)](n)-di-trans,octa-cis-undecaprenyl diphosphate + beta-D-GlcNAc-(1-&gt;4)-Mur2Ac(oyl-L-Ala-gamma-D-Glu-L-Lys-D-Ala-D-Ala)-di-trans,octa-cis-undecaprenyl diphosphate = [GlcNAc-(1-&gt;4)-Mur2Ac(oyl-L-Ala-gamma-D-Glu-L-Lys-D-Ala-D-Ala)](n+1)-di-trans,octa-cis-undecaprenyl diphosphate + di-trans,octa-cis-undecaprenyl diphosphate + H(+). The protein operates within cell wall biogenesis; peptidoglycan biosynthesis. Peptidoglycan polymerase that catalyzes glycan chain elongation from lipid-linked precursors. This Escherichia coli O45:K1 (strain S88 / ExPEC) protein is Biosynthetic peptidoglycan transglycosylase.